A 35-amino-acid chain; its full sequence is Phospholipase A2 neuwieditoxin-1 (35 aa).

Ca(2+) is bound by residues tyrosine 27, glycine 29, and glycine 31.

The protein belongs to the phospholipase A2 family. Group II subfamily. D49 sub-subfamily. As to quaternary structure, dimer. It depends on Ca(2+) as a cofactor. In terms of tissue distribution, expressed by the venom gland.

It localises to the secreted. The catalysed reaction is a 1,2-diacyl-sn-glycero-3-phosphocholine + H2O = a 1-acyl-sn-glycero-3-phosphocholine + a fatty acid + H(+). Functionally, snake venom phospholipase A2 (PLA2) that shows presynaptic neurotoxicity. 10 ug/ml of this protein produce complete neuromuscular blockade up to 80 minutes, without inhibiting the responses to acetylcholine (ACh) and potassium chloride (KCl). In addition, it produces a calcium-dependent blockade of acetylcholine release and causes appearance of giant miniature end-plate potentials. PLA2 catalyzes the calcium-dependent hydrolysis of the 2-acyl groups in 3-sn-phosphoglycerides. The protein is Phospholipase A2 neuwieditoxin-1 of Bothrops pauloensis (Neuwied's lancehead).